The chain runs to 124 residues: Small ribosomal subunit protein uS12 (124 aa).

The segment at 9–28 (RTERQTLSRKTKSPALRSCP) is disordered. D89 bears the 3-methylthioaspartic acid mark. The interval 104–124 (TAGVKDRRQSRSKYGAKAPKE) is disordered.

This sequence belongs to the universal ribosomal protein uS12 family. Part of the 30S ribosomal subunit. Contacts proteins S8 and S17. May interact with IF1 in the 30S initiation complex.

Its function is as follows. With S4 and S5 plays an important role in translational accuracy. Functionally, interacts with and stabilizes bases of the 16S rRNA that are involved in tRNA selection in the A site and with the mRNA backbone. Located at the interface of the 30S and 50S subunits, it traverses the body of the 30S subunit contacting proteins on the other side and probably holding the rRNA structure together. The combined cluster of proteins S8, S12 and S17 appears to hold together the shoulder and platform of the 30S subunit. The protein is Small ribosomal subunit protein uS12 of Synechococcus sp. (strain RCC307).